Reading from the N-terminus, the 90-residue chain is Small ribosomal subunit protein uS15 (90 aa).

It belongs to the universal ribosomal protein uS15 family. In terms of assembly, part of the 30S ribosomal subunit. Forms a bridge to the 50S subunit in the 70S ribosome, contacting the 23S rRNA.

Functionally, one of the primary rRNA binding proteins, it binds directly to 16S rRNA where it helps nucleate assembly of the platform of the 30S subunit by binding and bridging several RNA helices of the 16S rRNA. In terms of biological role, forms an intersubunit bridge (bridge B4) with the 23S rRNA of the 50S subunit in the ribosome. This chain is Small ribosomal subunit protein uS15, found in Wolbachia sp. subsp. Brugia malayi (strain TRS).